The primary structure comprises 619 residues: Polyadenylate-binding protein 1-like (619 aa).

RRM domains follow at residues 11 to 89, 99 to 175, 191 to 268, and 294 to 370; these read ASLY…WSQR, GNIF…HFKS, TNIY…RAQK, and VNLY…LAQR. The segment at 431 to 458 is disordered; the sequence is PAPRWTSQPPRPSSAYPPGASMVRPPVV. A PABC domain is found at 533–610; the sequence is QEPLTASMLA…AVAVLQAHQA (78 aa).

This sequence belongs to the polyadenylate-binding protein type-1 family. As to expression, expressed in ovary and testis. Also expressed in pancreas, liver and thymus, and at lower levels in other somatic tissues including brain and lung.

It localises to the cytoplasm. Its function is as follows. Poly(A)-binding protein involved in oocyte maturation and early embryo development. It is required for cytosolic mRNA polyadenylation and translational activation of maternally stored mRNA in oocytes. In Homo sapiens (Human), this protein is Polyadenylate-binding protein 1-like.